Consider the following 169-residue polypeptide: MIEIKISKIPRWDEINKIVKLREKDLVLLKLPKSVYEHPKMAYKLEYLKKKGIFIEVENAKRGRKRKVDDETVKKIHELIIEGYSVREIGNILGIGKSTVWDYAKDCIKELKLERFKKLVWEYREYLINKGKYSPSLQVLFLELEATVDYDLEKAKKILEDIIKHVKEF.

This is an uncharacterized protein from Methanocaldococcus jannaschii (strain ATCC 43067 / DSM 2661 / JAL-1 / JCM 10045 / NBRC 100440) (Methanococcus jannaschii).